We begin with the raw amino-acid sequence, 296 residues long: MFPVFHLSGESRRQMLQTALRFPHVFKARAEDSHKGTFGTLAVVGGSAGMSGAPVLAASAAMYLGCGKVWAGFNQDTLPFAVIAGFPEIMLDTADSLAKRQDINAWVVGCGLGTGRAAVGTLAGILTEHTDKPVVLDADALNILSTDAETRNLARGCKNLILTPHPAEAARLLGTTVAQVQADRTAAVRKIGAIFGATVVLKGHKTLVASPDTEIYVNESGNAGLATAGSGDVLGGIIGSLLAQGVPVFEAACAGAWLHGAAADVIKESAGIAAGLLAGEIAPAARWLRNRITKSM.

The 275-residue stretch at 18–292 folds into the YjeF C-terminal domain; the sequence is TALRFPHVFK…PAARWLRNRI (275 aa). The (6S)-NADPHX site is built by A53, G113, and H165. Residues 202 to 206 and G231 each bind AMP; that span reads KGHKT. D232 serves as a coordination point for (6S)-NADPHX.

Belongs to the NnrD/CARKD family. As to quaternary structure, homotetramer. Mg(2+) serves as cofactor.

It carries out the reaction (6S)-NADHX + ADP = AMP + phosphate + NADH + H(+). The enzyme catalyses (6S)-NADPHX + ADP = AMP + phosphate + NADPH + H(+). Catalyzes the dehydration of the S-form of NAD(P)HX at the expense of ADP, which is converted to AMP. Together with NAD(P)HX epimerase, which catalyzes the epimerization of the S- and R-forms, the enzyme allows the repair of both epimers of NAD(P)HX, a damaged form of NAD(P)H that is a result of enzymatic or heat-dependent hydration. This chain is ADP-dependent (S)-NAD(P)H-hydrate dehydratase, found in Neisseria meningitidis serogroup B (strain ATCC BAA-335 / MC58).